The following is a 1418-amino-acid chain: Ankyrin repeat and fibronectin type-III domain-containing protein 1 (1418 aa).

Residues 119–236 are disordered; the sequence is RDSVCSLPPP…DRGETPSLSE (118 aa). The span at 144–154 shows a compositional bias: polar residues; the sequence is PENTSINLSQC. Low complexity predominate over residues 171-186; sequence SASPTSSTPLRTTSTP. Basic and acidic residues predominate over residues 223-236; sequence LRDHDRGETPSLSE. ANK repeat units lie at residues 419-450 and 456-485; these read QSSE…ELDL and EGLT…KESP. Residues 556–652 form the Fibronectin type-III domain; that stretch reads APLMVRLSVT…LSQPPSAVPS (97 aa). The interval 893 to 900 is highly conserved peptide sequence; sequence GLYLGYLK. Disordered regions lie at residues 1134–1179, 1321–1343, and 1361–1418; these read VQKN…EVFL, LETP…YRQP, and KTSP…SSTL. Positions 1136–1146 are enriched in polar residues; that stretch reads KNDSTSSNTDY. A compositionally biased stretch (polar residues) spans 1407–1418; sequence NEQVSEILSSTL.

Its function is as follows. Required for vestibular-related functions. The sequence is that of Ankyrin repeat and fibronectin type-III domain-containing protein 1 (ankfn1) from Danio rerio (Zebrafish).